We begin with the raw amino-acid sequence, 67 residues long: ATP synthase protein 8 (67 aa).

Residues 8–24 form a helical membrane-spanning segment; it reads TWSITIMSMIMTLFIVF. K54 is subject to N6-acetyllysine; alternate. K54 carries the post-translational modification N6-succinyllysine; alternate. K57 is modified (N6-acetyllysine).

Belongs to the ATPase protein 8 family. F-type ATPases have 2 components, CF(1) - the catalytic core - and CF(0) - the membrane proton channel. Component of an ATP synthase complex composed of ATP5PB, ATP5MC1, ATP5F1E, ATP5PD, ATP5ME, ATP5PF, ATP5MF, MT-ATP6, MT-ATP8, ATP5F1A, ATP5F1B, ATP5F1D, ATP5F1C, ATP5PO, ATP5MG, ATP5MK and ATP5MJ. Interacts with PRICKLE3.

It localises to the mitochondrion membrane. Mitochondrial membrane ATP synthase (F(1)F(0) ATP synthase or Complex V) produces ATP from ADP in the presence of a proton gradient across the membrane which is generated by electron transport complexes of the respiratory chain. F-type ATPases consist of two structural domains, F(1) - containing the extramembraneous catalytic core and F(0) - containing the membrane proton channel, linked together by a central stalk and a peripheral stalk. During catalysis, ATP synthesis in the catalytic domain of F(1) is coupled via a rotary mechanism of the central stalk subunits to proton translocation. Part of the complex F(0) domain. Minor subunit located with subunit a in the membrane. The chain is ATP synthase protein 8 (MT-ATP8) from Felis silvestris lybica (African wildcat).